Consider the following 115-residue polypeptide: Large ribosomal subunit protein bL19 (115 aa).

It belongs to the bacterial ribosomal protein bL19 family.

This protein is located at the 30S-50S ribosomal subunit interface and may play a role in the structure and function of the aminoacyl-tRNA binding site. This Thermosipho africanus (strain TCF52B) protein is Large ribosomal subunit protein bL19.